Reading from the N-terminus, the 322-residue chain is Putative T-box protein 11 (322 aa).

Positions L16–K185 form a DNA-binding region, T-box. The span at T171–G182 shows a compositional bias: polar residues. The interval T171–I214 is disordered.

The protein resides in the nucleus. In Caenorhabditis elegans, this protein is Putative T-box protein 11 (tbx-11).